Reading from the N-terminus, the 177-residue chain is MDYGYIHLIIGPMFSGKSTELIRIVKRYQIAQYKCCVVKYLKDIRYGNSVYTHDNNHVSAISTTLLYDVVDKIMNFDIIGIDEGQFFKDIVSFSENMANMGKIIIIAALDSTFQRKEFNDILKLIPLSEKVTKLNAVCMECYKDAAFSKRITKEKEIELIGGKEKYKSVCRKCYFLE.

11-18 (GPMFSGKS) contacts ATP. Catalysis depends on E83, which acts as the Proton acceptor. F113 contributes to the substrate binding site. Zn(2+)-binding residues include C138 and C141. A substrate-binding site is contributed by 157–161 (IELIG). 2 residues coordinate Zn(2+): C170 and C173.

Belongs to the thymidine kinase family.

It carries out the reaction thymidine + ATP = dTMP + ADP + H(+). The chain is Thymidine kinase (TK) from Sheeppox virus (strain KS-1) (SPPV).